A 2355-amino-acid polypeptide reads, in one-letter code: Acetyl-CoA carboxylase 2 (2355 aa).

The 508-residue stretch at 138-645 folds into the Biotin carboxylation domain; it reads PIHSILVATN…HTGWLDSRIA (508 aa). Positions 291–485 constitute an ATP-grasp domain; that stretch reads GRSLVTVPEE…AAQVAVGMGI (195 aa). 317–374 contacts ATP; that stretch reads CQVVGYPAMIKASWGGGGKGIRKVHNDDEVRALFKQVQGEVPGSPIFIMKVASQSRHL. Mg(2+) contacts are provided by E440, E454, and N456. 3 residues coordinate Mn(2+): E440, E454, and N456. The active site involves R458. A Biotinyl-binding domain is found at 772–846; that stretch reads LQNDHDPSKL…QAGELIAKLD (75 aa). The residue at position 813 (K813) is an N6-biotinyllysine. T1133 is subject to Phosphothreonine. The residue at position 1293 (S1293) is a Phosphoserine. The CoA carboxyltransferase N-terminal domain maps to 1593-1932; that stretch reads QYKPLNNLDR…YVGGPLPVLA (340 aa). The tract at residues 1593–2251 is carboxyltransferase; that stretch reads QYKPLNNLDR…ESSLVRNIRK (659 aa). The CoA site is built by R1841, K2142, and R2144. Residues 1936 to 2251 enclose the CoA carboxyltransferase C-terminal domain; that stretch reads PPERTVEYIP…ESSLVRNIRK (316 aa).

In terms of assembly, homodimer. Biotin is required as a cofactor. It depends on Mg(2+) as a cofactor. Mn(2+) serves as cofactor. In terms of tissue distribution, widely expressed at low levels.

The protein localises to the cytoplasm. It localises to the cytosol. The enzyme catalyses hydrogencarbonate + acetyl-CoA + ATP = malonyl-CoA + ADP + phosphate + H(+). It carries out the reaction N(6)-biotinyl-L-lysyl-[protein] + hydrogencarbonate + ATP = N(6)-carboxybiotinyl-L-lysyl-[protein] + ADP + phosphate + H(+). The protein operates within lipid metabolism; malonyl-CoA biosynthesis; malonyl-CoA from acetyl-CoA: step 1/1. Multifunctional enzyme that catalyzes the carboxylation of acetyl-CoA, forming malonyl-CoA, which is used in the plastid for fatty acid synthesis and in the cytosol in various biosynthetic pathways including fatty acid elongation. The sequence is that of Acetyl-CoA carboxylase 2 (ACC2) from Arabidopsis thaliana (Mouse-ear cress).